A 647-amino-acid polypeptide reads, in one-letter code: Nucleoside triphosphatase I (647 aa).

The Helicase ATP-binding domain maps to 48–212 (FIGLKNLNSM…NNLIGLLRPN (165 aa)). Residue 61–68 (WDTGTGKT) participates in ATP binding. A DEXH box motif is present at residues 150-153 (DEVH). Residues 378–541 (YIEACRIILN…KINVVFDLLK (164 aa)) form the Helicase C-terminal domain. A binding to the cap-specific mRNA (nucleoside-2'-O-)-methyltransferase region spans residues 467–533 (DIIILDMPWN…DIIKNKQGKI (67 aa)).

Belongs to the helicase family. NPH I subfamily. Monomer. Interacts (via C-terminus) with RAP94 (via N-terminus). Interacts with the cap-specific mRNA (nucleoside-2'-O-)-methyltransferase.

Its subcellular location is the virion. The catalysed reaction is a ribonucleoside 5'-triphosphate + H2O = a ribonucleoside 5'-diphosphate + phosphate + H(+). Its function is as follows. DNA-dependent ATPase required for providing the needed energy to achieve the termination of early transcripts. Acts in concert with the RAP94 subunit of the virion RNA polymerase and the capping enzyme/VTF to catalyze release of UUUUUNU-containing nascent RNA from the elongation complex. NPH-I must bind ssDNA in order to exhibit ATPase activity. The chain is Nucleoside triphosphatase I (NPH1) from Choristoneura fumiferana (Spruce budworm moth).